We begin with the raw amino-acid sequence, 50 residues long: Small, acid-soluble spore protein K (50 aa).

The interval M1–R50 is disordered. Composition is skewed to basic and acidic residues over residues F17 to D33 and P40 to R50.

The protein belongs to the SspK family.

It is found in the spore core. The sequence is that of Small, acid-soluble spore protein K from Bacillus velezensis (strain DSM 23117 / BGSC 10A6 / LMG 26770 / FZB42) (Bacillus amyloliquefaciens subsp. plantarum).